A 494-amino-acid chain; its full sequence is Glutamyl-tRNA(Gln) amidotransferase subunit A (494 aa).

Active-site charge relay system residues include K79 and S159. S183 functions as the Acyl-ester intermediate in the catalytic mechanism.

Belongs to the amidase family. GatA subfamily. As to quaternary structure, heterotrimer of A, B and C subunits.

The catalysed reaction is L-glutamyl-tRNA(Gln) + L-glutamine + ATP + H2O = L-glutaminyl-tRNA(Gln) + L-glutamate + ADP + phosphate + H(+). In terms of biological role, allows the formation of correctly charged Gln-tRNA(Gln) through the transamidation of misacylated Glu-tRNA(Gln) in organisms which lack glutaminyl-tRNA synthetase. The reaction takes place in the presence of glutamine and ATP through an activated gamma-phospho-Glu-tRNA(Gln). The sequence is that of Glutamyl-tRNA(Gln) amidotransferase subunit A from Bartonella bacilliformis (strain ATCC 35685 / KC583 / Herrer 020/F12,63).